The chain runs to 686 residues: tRNA (guanine(37)-N(1))-methyltransferase (686 aa).

A disordered region spans residues 206–244 (GGPSSVSLTEDTDGSEQPQGLPRAAAAPPPPSNKRRASY). Residues His-428, 466–467 (DL), 495–496 (DG), and Asn-530 contribute to the S-adenosyl-L-methionine site.

The protein belongs to the class I-like SAM-binding methyltransferase superfamily. TRM5/TYW2 family. In terms of assembly, monomer.

Its subcellular location is the mitochondrion matrix. The protein localises to the nucleus. The protein resides in the cytoplasm. It catalyses the reaction guanosine(37) in tRNA + S-adenosyl-L-methionine = N(1)-methylguanosine(37) in tRNA + S-adenosyl-L-homocysteine + H(+). In terms of biological role, specifically methylates the N1 position of guanosine-37 in various cytoplasmic and mitochondrial tRNAs. Methylation is not dependent on the nature of the nucleoside 5' of the target nucleoside. This is the first step in the biosynthesis of wybutosine (yW), a modified base adjacent to the anticodon of tRNAs and required for accurate decoding. This chain is tRNA (guanine(37)-N(1))-methyltransferase, found in Leishmania major.